The sequence spans 203 residues: Pyridoxine/pyridoxamine 5'-phosphate oxidase (203 aa).

FMN-binding positions include 50 to 55, 65 to 66, Lys-72, and Gln-94; these read RMVLLK and YT. Lys-55 provides a ligand contact to substrate. Substrate is bound by residues Tyr-112, Arg-116, and Ser-120. FMN-binding positions include 129–130 and Trp-174; that span reads QS. Residue 180–182 participates in substrate binding; the sequence is RLH. FMN is bound at residue Arg-184.

Belongs to the pyridoxamine 5'-phosphate oxidase family. In terms of assembly, homodimer. Requires FMN as cofactor.

The catalysed reaction is pyridoxamine 5'-phosphate + O2 + H2O = pyridoxal 5'-phosphate + H2O2 + NH4(+). It catalyses the reaction pyridoxine 5'-phosphate + O2 = pyridoxal 5'-phosphate + H2O2. It functions in the pathway cofactor metabolism; pyridoxal 5'-phosphate salvage; pyridoxal 5'-phosphate from pyridoxamine 5'-phosphate: step 1/1. It participates in cofactor metabolism; pyridoxal 5'-phosphate salvage; pyridoxal 5'-phosphate from pyridoxine 5'-phosphate: step 1/1. Catalyzes the oxidation of either pyridoxine 5'-phosphate (PNP) or pyridoxamine 5'-phosphate (PMP) into pyridoxal 5'-phosphate (PLP). In Brucella anthropi (strain ATCC 49188 / DSM 6882 / CCUG 24695 / JCM 21032 / LMG 3331 / NBRC 15819 / NCTC 12168 / Alc 37) (Ochrobactrum anthropi), this protein is Pyridoxine/pyridoxamine 5'-phosphate oxidase.